The primary structure comprises 116 residues: Aspartate 1-decarboxylase (116 aa).

The Schiff-base intermediate with substrate; via pyruvic acid role is filled by Ser-25. Residue Ser-25 is modified to Pyruvic acid (Ser). Thr-57 serves as a coordination point for substrate. The Proton donor role is filled by Tyr-58. 73–75 (GAA) provides a ligand contact to substrate.

This sequence belongs to the PanD family. Heterooctamer of four alpha and four beta subunits. Pyruvate is required as a cofactor. Post-translationally, is synthesized initially as an inactive proenzyme, which is activated by self-cleavage at a specific serine bond to produce a beta-subunit with a hydroxyl group at its C-terminus and an alpha-subunit with a pyruvoyl group at its N-terminus.

The protein localises to the cytoplasm. It carries out the reaction L-aspartate + H(+) = beta-alanine + CO2. It functions in the pathway cofactor biosynthesis; (R)-pantothenate biosynthesis; beta-alanine from L-aspartate: step 1/1. Its function is as follows. Catalyzes the pyruvoyl-dependent decarboxylation of aspartate to produce beta-alanine. The protein is Aspartate 1-decarboxylase of Syntrophus aciditrophicus (strain SB).